We begin with the raw amino-acid sequence, 192 residues long: Protein GrpE (192 aa).

Positions 1-43 are disordered; that stretch reads MSKEEFPHEKDLKDEVTPDKAPKKDPKAASKEEVKEDPAKDYE.

This sequence belongs to the GrpE family. Homodimer.

It localises to the cytoplasm. Participates actively in the response to hyperosmotic and heat shock by preventing the aggregation of stress-denatured proteins, in association with DnaK and GrpE. It is the nucleotide exchange factor for DnaK and may function as a thermosensor. Unfolded proteins bind initially to DnaJ; upon interaction with the DnaJ-bound protein, DnaK hydrolyzes its bound ATP, resulting in the formation of a stable complex. GrpE releases ADP from DnaK; ATP binding to DnaK triggers the release of the substrate protein, thus completing the reaction cycle. Several rounds of ATP-dependent interactions between DnaJ, DnaK and GrpE are required for fully efficient folding. This is Protein GrpE from Lactobacillus gasseri (strain ATCC 33323 / DSM 20243 / BCRC 14619 / CIP 102991 / JCM 1131 / KCTC 3163 / NCIMB 11718 / NCTC 13722 / AM63).